A 914-amino-acid polypeptide reads, in one-letter code: Inter-alpha-trypsin inhibitor heavy chain H1 (914 aa).

A signal peptide spans 1–30 (MDGAAVGLRVLLGLGLVSLLTLEAMPAAWG). The propeptide occupies 31 to 36 (LATTGR). Positions 39–168 (AREKRQAVDT…KATFQLTYEE (130 aa)) constitute a VIT domain. The S-linked (Hex...) cysteine glycan is linked to C62. S131 bears the Phosphoserine mark. 2 N-linked (GlcNAc...) asparagine glycosylation sites follow: N288 and N291. In terms of domain architecture, VWFA spans 293–453 (SKNLVFVIDI…FNFLEVMSME (161 aa)). A phosphothreonine mark is found at T405 and T410. An N-linked (GlcNAc...) asparagine glycan is attached at N591. T656 is a glycosylation site (O-linked (GalNAc...) threonine). D675 is subject to Aspartate 1-(chondroitin 4-sulfate)-ester. Positions 676–914 (PHFIIYVPQK…HTDYIVPDIF (239 aa)) are excised as a propeptide.

It belongs to the ITIH family. In terms of assembly, I-alpha-I plasma protease inhibitors are assembled from one or two heavy chains (HC) and one light chain, bikunin. Inter-alpha-inhibitor (I-alpha-I) is composed of ITIH1/HC1, ITIH2/HC2 and bikunin. Interacts with TNFAIP6 (via Link and CUB domains). In terms of processing, heavy chains are linked to bikunin via chondroitin 4-sulfate esterified to the alpha-carboxyl of the C-terminal aspartate after propeptide cleavage. Post-translationally, the S-linked glycan is composed of two 6-carbon sugars, possibly Glc or Gal.

It localises to the secreted. May act as a carrier of hyaluronan in serum or as a binding protein between hyaluronan and other matrix protein, including those on cell surfaces in tissues to regulate the localization, synthesis and degradation of hyaluronan which are essential to cells undergoing biological processes. The sequence is that of Inter-alpha-trypsin inhibitor heavy chain H1 (ITIH1) from Mesocricetus auratus (Golden hamster).